Here is a 953-residue protein sequence, read N- to C-terminus: Scaffold attachment factor B2 (953 aa).

Residues 1 to 29 (MAETLPGSGDSGPGTASLGPGVAETGTRR) are disordered. An N-acetylalanine modification is found at alanine 2. Residues 30–64 (LSELRVIDLRAELKKRNLDTGGNKSVLMERLKKAV) form the SAP domain. Serine 54 carries the post-translational modification Phosphoserine. Lysine 65 participates in a covalent cross-link: Glycyl lysine isopeptide (Lys-Gly) (interchain with G-Cter in SUMO1); alternate. A Glycyl lysine isopeptide (Lys-Gly) (interchain with G-Cter in SUMO2); alternate cross-link involves residue lysine 65. Residues 91–114 (KGLKMEEEGTEDNGLEDDSRDGQE) form a disordered region. Residue lysine 94 forms a Glycyl lysine isopeptide (Lys-Gly) (interchain with G-Cter in SUMO2) linkage. Positions 98 to 114 (EGTEDNGLEDDSRDGQE) are enriched in acidic residues. Phosphoserine is present on residues serine 109 and serine 158. Residues lysine 188 and lysine 199 each participate in a glycyl lysine isopeptide (Lys-Gly) (interchain with G-Cter in SUMO2) cross-link. At threonine 201 the chain carries Phosphothreonine. A Phosphoserine modification is found at serine 207. Residues 219–404 (ILGETCKSEP…KDEKGRVGSG (186 aa)) are disordered. Residues 224–233 (CKSEPVKEES) show a composition bias toward basic and acidic residues. Residue lysine 230 forms a Glycyl lysine isopeptide (Lys-Gly) (interchain with G-Cter in SUMO) linkage. Positions 274 to 285 (SESTAHAQSSKA) are enriched in polar residues. A compositionally biased stretch (basic and acidic residues) spans 292 to 308 (VKREPAEQPGDGERTDC). Residue lysine 293 forms a Glycyl lysine isopeptide (Lys-Gly) (interchain with G-Cter in SUMO) linkage. Low complexity predominate over residues 318–329 (EQSSAASELAEA). The span at 345 to 358 (EARDSKEDGRKFDF) shows a compositional bias: basic and acidic residues. The span at 370-382 (ESSTSEGADQKMS) shows a compositional bias: polar residues. Residues lysine 380, lysine 385, lysine 388, lysine 391, and lysine 395 each participate in a glycyl lysine isopeptide (Lys-Gly) (interchain with G-Cter in SUMO2) cross-link. Positions 383–400 (SFKEEKDIKPIIKDEKGR) are enriched in basic and acidic residues. The RRM domain occupies 407–485 (RNLWVSGLSS…RMISVEKAKN (79 aa)). Serine 507 and serine 513 each carry phosphoserine. Glycyl lysine isopeptide (Lys-Gly) (interchain with G-Cter in SUMO2) cross-links involve residues lysine 517, lysine 524, lysine 525, lysine 541, lysine 542, and lysine 551. Positions 525-551 (KEEKIEKKEEKKPEDIKKEEKDQDELK) are enriched in basic and acidic residues. Disordered regions lie at residues 525–665 (KEEK…RLQR) and 684–953 (RERL…TRRY). Polar residues predominate over residues 555–564 (TNRSRVTKSG). The span at 567-579 (GMERTVVMDKSKG) shows a compositional bias: basic and acidic residues. Residues lysine 578, lysine 586, and lysine 608 each participate in a glycyl lysine isopeptide (Lys-Gly) (interchain with G-Cter in SUMO2) cross-link. Composition is skewed to basic and acidic residues over residues 590–665 (RSKE…RLQR) and 684–820 (RERL…DSRD). The interaction with SAFB1 stretch occupies residues 600–953 (DRKSESKEKR…PPYPHFTRRY (354 aa)). A Glycyl lysine isopeptide (Lys-Gly) (interchain with G-Cter in SUMO2); alternate cross-link involves residue lysine 616. An N6-acetyllysine; alternate modification is found at lysine 616. The Nuclear localization signal signature appears at 713 to 730 (RRQQEQLRYEQERRPGRR). A phosphoserine mark is found at serine 787 and serine 832. The span at 843–859 (GGRDWGEHNQRLEEHQA) shows a compositional bias: basic and acidic residues. Positions 881–890 (GERGLSGPSG) are enriched in gly residues. Phosphoserine is present on serine 886. Arginine 897 and arginine 903 each carry omega-N-methylarginine. The span at 899–927 (GVAGRGGFAQGGHSQGHVVPGGGLEGGGV) shows a compositional bias: gly residues.

Interacts with SAFB/SAFB1 and SCAM1. Interacts with isoform 2 SRPK1 and inhibits its activity. As to expression, expressed at high levels in the CNS and at low levels in the liver. Expressed in a wide number of breast cancer cell lines.

It is found in the cytoplasm. The protein resides in the nucleus. Functionally, binds to scaffold/matrix attachment region (S/MAR) DNA. Can function as an estrogen receptor corepressor and can also inhibit cell proliferation. This chain is Scaffold attachment factor B2 (SAFB2), found in Homo sapiens (Human).